Consider the following 475-residue polypeptide: Deoxyguanosinetriphosphate triphosphohydrolase-like protein (475 aa).

The region spanning 118-272 (RLTHTLEVAQ…MDLSDDIAYS (155 aa)) is the HD domain.

Belongs to the dGTPase family. Type 2 subfamily.

The protein is Deoxyguanosinetriphosphate triphosphohydrolase-like protein (dgt) of Bifidobacterium longum (strain NCC 2705).